The chain runs to 204 residues: Imidazoleglycerol-phosphate dehydratase (204 aa).

Positions 183–204 (DPRMDGITPSTKGTLSESGDSQ) are disordered. Residues 190-204 (TPSTKGTLSESGDSQ) are compositionally biased toward polar residues.

It belongs to the imidazoleglycerol-phosphate dehydratase family.

It localises to the cytoplasm. It carries out the reaction D-erythro-1-(imidazol-4-yl)glycerol 3-phosphate = 3-(imidazol-4-yl)-2-oxopropyl phosphate + H2O. Its pathway is amino-acid biosynthesis; L-histidine biosynthesis; L-histidine from 5-phospho-alpha-D-ribose 1-diphosphate: step 6/9. The chain is Imidazoleglycerol-phosphate dehydratase from Alcanivorax borkumensis (strain ATCC 700651 / DSM 11573 / NCIMB 13689 / SK2).